The sequence spans 125 residues: Small ribosomal subunit protein uS12 (125 aa).

The segment at 1–24 (MPTISQLVRKPRKAKRTKSKVPAL) is disordered. Over residues 9–19 (RKPRKAKRTKS) the composition is skewed to basic residues. Residue Asp-89 is modified to 3-methylthioaspartic acid. The tract at residues 101–125 (SLDTAGVKDRKQARSKYGSKRPKSA) is disordered. Basic residues predominate over residues 113-125 (ARSKYGSKRPKSA).

The protein belongs to the universal ribosomal protein uS12 family. Part of the 30S ribosomal subunit. Contacts proteins S8 and S17. May interact with IF1 in the 30S initiation complex.

Its function is as follows. With S4 and S5 plays an important role in translational accuracy. Interacts with and stabilizes bases of the 16S rRNA that are involved in tRNA selection in the A site and with the mRNA backbone. Located at the interface of the 30S and 50S subunits, it traverses the body of the 30S subunit contacting proteins on the other side and probably holding the rRNA structure together. The combined cluster of proteins S8, S12 and S17 appears to hold together the shoulder and platform of the 30S subunit. The polypeptide is Small ribosomal subunit protein uS12 (Nitrosomonas europaea (strain ATCC 19718 / CIP 103999 / KCTC 2705 / NBRC 14298)).